The sequence spans 121 residues: Mediator of RNA polymerase II transcription subunit 22 (121 aa).

It belongs to the Mediator complex subunit 22 family. As to quaternary structure, component of the Mediator complex.

It is found in the nucleus. Component of the Mediator complex, a coactivator involved in the regulated transcription of nearly all RNA polymerase II-dependent genes. Mediator functions as a bridge to convey information from gene-specific regulatory proteins to the basal RNA polymerase II transcription machinery. Mediator is recruited to promoters by direct interactions with regulatory proteins and serves as a scaffold for the assembly of a functional preinitiation complex with RNA polymerase II and the general transcription factors. This is Mediator of RNA polymerase II transcription subunit 22 (SRB6) from Kluyveromyces lactis (strain ATCC 8585 / CBS 2359 / DSM 70799 / NBRC 1267 / NRRL Y-1140 / WM37) (Yeast).